The sequence spans 172 residues: Large ribosomal subunit protein uL10 (172 aa).

Belongs to the universal ribosomal protein uL10 family. In terms of assembly, part of the ribosomal stalk of the 50S ribosomal subunit. The N-terminus interacts with L11 and the large rRNA to form the base of the stalk. The C-terminus forms an elongated spine to which L12 dimers bind in a sequential fashion forming a multimeric L10(L12)X complex.

In terms of biological role, forms part of the ribosomal stalk, playing a central role in the interaction of the ribosome with GTP-bound translation factors. This is Large ribosomal subunit protein uL10 from Rhodopseudomonas palustris (strain TIE-1).